The primary structure comprises 363 residues: NADH-quinone oxidoreductase subunit H (363 aa).

The next 10 membrane-spanning stretches (helical) occupy residues 29-49 (VLKI…YVVW), 62-82 (GPMY…KLLF), 94-114 (VIFV…WAVV), 127-147 (VGLL…ILAG), 166-186 (VVSY…AAGS), 202-222 (FFDW…VSGV), 239-257 (IVAG…LFFL), 264-286 (ILVS…QGWV), 293-313 (LIDW…LFFA), and 339-359 (FIPL…SGVI).

This sequence belongs to the complex I subunit 1 family. In terms of assembly, NDH-1 is composed of 14 different subunits. Subunits NuoA, H, J, K, L, M, N constitute the membrane sector of the complex.

Its subcellular location is the cell inner membrane. It carries out the reaction a quinone + NADH + 5 H(+)(in) = a quinol + NAD(+) + 4 H(+)(out). Functionally, NDH-1 shuttles electrons from NADH, via FMN and iron-sulfur (Fe-S) centers, to quinones in the respiratory chain. The immediate electron acceptor for the enzyme in this species is believed to be ubiquinone. Couples the redox reaction to proton translocation (for every two electrons transferred, four hydrogen ions are translocated across the cytoplasmic membrane), and thus conserves the redox energy in a proton gradient. This subunit may bind ubiquinone. The protein is NADH-quinone oxidoreductase subunit H of Xylella fastidiosa (strain M12).